A 245-amino-acid polypeptide reads, in one-letter code: Probable phosphatase YcdX (245 aa).

Zn(2+) contacts are provided by His-7, His-9, His-15, His-40, Glu-73, His-101, His-131, Asp-192, and His-194.

It belongs to the PHP family. As to quaternary structure, homotrimer. It depends on Zn(2+) as a cofactor.

The polypeptide is Probable phosphatase YcdX (Shigella flexneri serotype 5b (strain 8401)).